The primary structure comprises 124 residues: Ribosome-binding factor A (124 aa).

It belongs to the RbfA family. Monomer. Binds 30S ribosomal subunits, but not 50S ribosomal subunits or 70S ribosomes.

It is found in the cytoplasm. Functionally, one of several proteins that assist in the late maturation steps of the functional core of the 30S ribosomal subunit. Associates with free 30S ribosomal subunits (but not with 30S subunits that are part of 70S ribosomes or polysomes). Required for efficient processing of 16S rRNA. May interact with the 5'-terminal helix region of 16S rRNA. The protein is Ribosome-binding factor A of Thiobacillus denitrificans (strain ATCC 25259 / T1).